Reading from the N-terminus, the 249-residue chain is tRNA pseudouridine synthase A (249 aa).

The active-site Nucleophile is Asp53. Tyr111 serves as a coordination point for substrate.

Belongs to the tRNA pseudouridine synthase TruA family. As to quaternary structure, homodimer.

The catalysed reaction is uridine(38/39/40) in tRNA = pseudouridine(38/39/40) in tRNA. In terms of biological role, formation of pseudouridine at positions 38, 39 and 40 in the anticodon stem and loop of transfer RNAs. The protein is tRNA pseudouridine synthase A of Streptococcus pneumoniae (strain 70585).